A 404-amino-acid polypeptide reads, in one-letter code: Cysteine desulfurase IscS (404 aa).

Pyridoxal 5'-phosphate is bound by residues 75-76 (AT), Asn155, Gln183, and 203-205 (SAH). The residue at position 206 (Lys206) is an N6-(pyridoxal phosphate)lysine. Thr243 contributes to the pyridoxal 5'-phosphate binding site. Cys328 (cysteine persulfide intermediate) is an active-site residue. Cys328 provides a ligand contact to [2Fe-2S] cluster.

The protein belongs to the class-V pyridoxal-phosphate-dependent aminotransferase family. NifS/IscS subfamily. Homodimer. Forms a heterotetramer with IscU, interacts with other sulfur acceptors. Pyridoxal 5'-phosphate serves as cofactor.

Its subcellular location is the cytoplasm. The enzyme catalyses (sulfur carrier)-H + L-cysteine = (sulfur carrier)-SH + L-alanine. The protein operates within cofactor biosynthesis; iron-sulfur cluster biosynthesis. Functionally, master enzyme that delivers sulfur to a number of partners involved in Fe-S cluster assembly, tRNA modification or cofactor biosynthesis. Catalyzes the removal of elemental sulfur atoms from cysteine to produce alanine. Functions as a sulfur delivery protein for Fe-S cluster synthesis onto IscU, an Fe-S scaffold assembly protein, as well as other S acceptor proteins. This Shewanella sediminis (strain HAW-EB3) protein is Cysteine desulfurase IscS.